A 359-amino-acid polypeptide reads, in one-letter code: MAAVSGLVRRPLREVSGLLKRRFHWTAPAALQVTVRDAINQGMDEELERDEKVFLLGEEVAQYDGAYKVSRGLWKKYGDKRIIDTPISEMGFAGIAVGAAMAGLRPICEFMTFNFSMQAIDQVINSAAKTYYMSGGLQPVPIVFRGPNGASAGVAAQHSQCFAAWYGHCPGLKVVSPWNSEDAKGLIKSAIRDNNPVVVLENELMYGVPFEFPPEAQSKDFLIPIGKAKIERQGTHITVVSHSRPVGHCLEAAAVLSKEGVECEVINMRTIRPMDMETIEASVMKTNHLVTVEGGWPQFGVGAEICARIMEGPAFNFLDAPAVRVTGADVPMPYAKILEDNSIPQVKDIIFAIKKTLNI.

A mitochondrion-targeting transit peptide spans 1 to 30 (MAAVSGLVRRPLREVSGLLKRRFHWTAPAA). Tyr67 carries the phosphotyrosine modification. Glu89 contacts thiamine diphosphate. K(+) contacts are provided by Ile142, Ala190, Ile191, Asp193, and Asn195. Lys354 carries the N6-acetyllysine modification.

As to quaternary structure, heterotetramer of two PDHA1 and two PDHB subunits. The heterotetramer interacts with DLAT, and is part of the multimeric pyruvate dehydrogenase complex that contains multiple copies of pyruvate dehydrogenase (E1), dihydrolipoamide acetyltransferase (DLAT, E2) and lipoamide dehydrogenase (DLD, E3). These subunits are bound to an inner core composed of about 48 DLAT and 12 PDHX molecules. Interacts with DLAT. Thiamine diphosphate serves as cofactor.

The protein resides in the mitochondrion matrix. The catalysed reaction is N(6)-[(R)-lipoyl]-L-lysyl-[protein] + pyruvate + H(+) = N(6)-[(R)-S(8)-acetyldihydrolipoyl]-L-lysyl-[protein] + CO2. In terms of biological role, the pyruvate dehydrogenase complex catalyzes the overall conversion of pyruvate to acetyl-CoA and CO(2), and thereby links the glycolytic pathway to the tricarboxylic cycle. The polypeptide is Pyruvate dehydrogenase E1 component subunit beta, mitochondrial (PDHB) (Homo sapiens (Human)).